A 182-amino-acid polypeptide reads, in one-letter code: ADP-ribosylation factor-like protein 11 (182 aa).

Glycine 2 is lipidated: N-myristoyl glycine. Residues 19 to 26 (GLDSAGKT), 63 to 67 (DVGGQ), and 122 to 125 (NKQE) contribute to the GTP site.

The protein belongs to the small GTPase superfamily. Arf family.

May play a role in apoptosis. May act as a tumor suppressor. This is ADP-ribosylation factor-like protein 11 (ARL11) from Bos taurus (Bovine).